We begin with the raw amino-acid sequence, 375 residues long: GDP-mannose transporter GONST2 (375 aa).

A run of 9 helical transmembrane segments spans residues 79–99 (LVSGAAYCISSCSMIILNKIV), 112–132 (MLYQNLISCLVVAVLDISGVV), 141–161 (LIRVWMPVNVIFVGMLVSGMY), 165–185 (YINVAMVTILKNATNILTGIG), 199–219 (WAAMFMMIISAISGGITDLTF), 262–282 (MVLLNNLLSIPFGIILIILLG), 300–320 (VVATASGFLGLAISFTSMWFL), 327–347 (TYSLVGSLNKVPISLAGLVLF), and 349–369 (VPLSLPNLFSILFGLFAGVVF).

The protein belongs to the nucleotide-sugar transporter family. GDP-Mannose:GMP antiporter (GMA) (TC 2.A.7.13) subfamily. In terms of tissue distribution, expressed in rosette leaves, stems, flowers and siliques.

It localises to the golgi apparatus membrane. Functionally, GDP-mannose transporter that may be involved in the import of GDP-mannose from the cytoplasm into the Golgi lumen. In Arabidopsis thaliana (Mouse-ear cress), this protein is GDP-mannose transporter GONST2.